The primary structure comprises 265 residues: Glutamate racemase (265 aa).

Substrate-binding positions include 7-8 (DS) and 39-40 (YG). The active-site Proton donor/acceptor is the Cys-70. Substrate is bound at residue 71-72 (NT). The active-site Proton donor/acceptor is the Cys-179. A substrate-binding site is contributed by 180–181 (TH).

The protein belongs to the aspartate/glutamate racemases family.

It catalyses the reaction L-glutamate = D-glutamate. The protein operates within cell wall biogenesis; peptidoglycan biosynthesis. Its function is as follows. Provides the (R)-glutamate required for cell wall biosynthesis. This is Glutamate racemase from Gloeobacter violaceus (strain ATCC 29082 / PCC 7421).